Reading from the N-terminus, the 303-residue chain is Cytochrome c oxidase subunit 2 (303 aa).

An N-terminal signal peptide occupies residues 1–25; the sequence is MRHSTTLTGCATGAAGLLAATAAAA. Helical transmembrane passes span 60–80 and 104–124; these read FILV…LYAV and WTIV…PVLF. Cu cation is bound by residues histidine 217, cysteine 252, cysteine 256, and histidine 260.

This sequence belongs to the cytochrome c oxidase subunit 2 family. It depends on Cu cation as a cofactor.

Its subcellular location is the cell membrane. It carries out the reaction 4 Fe(II)-[cytochrome c] + O2 + 8 H(+)(in) = 4 Fe(III)-[cytochrome c] + 2 H2O + 4 H(+)(out). Functionally, subunits I and II form the functional core of the enzyme complex. Electrons originating in cytochrome c are transferred via heme a and Cu(A) to the binuclear center formed by heme a3 and Cu(B). The protein is Cytochrome c oxidase subunit 2 (ctaC) of Cereibacter sphaeroides (Rhodobacter sphaeroides).